The sequence spans 268 residues: Protein MGF 300-1L (268 aa).

The Cytoplasmic portion of the chain corresponds to 1 to 175; that stretch reads MVSLTTCCLK…QTFKTFYAKN (175 aa). A helical transmembrane segment spans residues 176 to 193; it reads YSLSTLYCIFLAIYYKLY. Residues 194 to 268 lie on the Extracellular side of the membrane; it reads TALRKMVKIY…MYAFSQNDYW (75 aa).

This sequence belongs to the asfivirus MGF 300 family.

The protein resides in the host membrane. In terms of biological role, plays a role in virus cell tropism, and may be required for efficient virus replication in macrophages. The sequence is that of Protein MGF 300-1L from Ornithodoros (relapsing fever ticks).